The following is a 144-amino-acid chain: Large ribosomal subunit protein uL15 (144 aa).

Positions 1-58 are disordered; the sequence is MRLNTLAPAAGSKHAPKRVGRGIGSGLGKTGGRGHKGQKSRSGGKVRPGFEGGQMPLK. Residues 21 to 31 are compositionally biased toward gly residues; it reads RGIGSGLGKTG. Residues 32 to 44 show a composition bias toward basic residues; the sequence is GRGHKGQKSRSGG.

It belongs to the universal ribosomal protein uL15 family. As to quaternary structure, part of the 50S ribosomal subunit.

Functionally, binds to the 23S rRNA. In Vibrio parahaemolyticus serotype O3:K6 (strain RIMD 2210633), this protein is Large ribosomal subunit protein uL15.